The sequence spans 569 residues: Potassium-transporting ATPase potassium-binding subunit (569 aa).

A run of 10 helical transmembrane segments spans residues 3 to 23, 68 to 88, 136 to 156, 179 to 199, 259 to 279, 284 to 304, 384 to 404, 422 to 442, 490 to 510, and 534 to 554; these read LMEY…SPVL, AASL…VLML, VGLA…AVAV, VLYV…GQGV, LQML…GEAV, HAWT…LSLY, GLYG…LMVG, AMLA…VAAV, LALA…GVAG, and LLLT…ALAL.

Belongs to the KdpA family. The system is composed of three essential subunits: KdpA, KdpB and KdpC.

It is found in the cell inner membrane. In terms of biological role, part of the high-affinity ATP-driven potassium transport (or Kdp) system, which catalyzes the hydrolysis of ATP coupled with the electrogenic transport of potassium into the cytoplasm. This subunit binds the periplasmic potassium ions and delivers the ions to the membrane domain of KdpB through an intramembrane tunnel. This chain is Potassium-transporting ATPase potassium-binding subunit, found in Nitratidesulfovibrio vulgaris (strain DP4) (Desulfovibrio vulgaris).